A 546-amino-acid polypeptide reads, in one-letter code: ATP-dependent rRNA helicase RRP3 (546 aa).

The disordered stretch occupies residues 1–108 (MSDFKRRKLE…DEEAEAQAAA (108 aa)). 2 stretches are compositionally biased toward acidic residues: residues 60 to 77 (SEEDEDEFGGFSGEEEED) and 94 to 103 (EAEQSDEEAE). The Q motif signature appears at 115–143 (KTFADLGVREELCDACENLGYKTATPIQT). The 173-residue stretch at 146-318 (IPLALAGKDI…RAALKNPVRV (173 aa)) folds into the Helicase ATP-binding domain. 159 to 166 (AETGSGKT) serves as a coordination point for ATP. The short motif at 265 to 268 (DEAD) is the DEAD box element. A Helicase C-terminal domain is found at 342 to 490 (YKDLYLIHLL…EEKVSRDEVM (149 aa)). The span at 504 to 515 (VREMKDLHDQRK) shows a compositional bias: basic and acidic residues. A disordered region spans residues 504-546 (VREMKDLHDQRKSGRGGRGGGRGGGRGGRGRGGRRDNMDMDEG). Positions 519-530 (GGRGGGRGGGRG) are enriched in gly residues. Residues 536-546 (GRRDNMDMDEG) show a composition bias toward basic and acidic residues.

It belongs to the DEAD box helicase family. DDX47/RRP3 subfamily. As to quaternary structure, interacts with the SSU processome.

It is found in the nucleus. The catalysed reaction is ATP + H2O = ADP + phosphate + H(+). In terms of biological role, ATP-dependent rRNA helicase required for pre-ribosomal RNA processing. Involved in the maturation of the 35S-pre-rRNA and to its cleavage to mature 18S rRNA. The protein is ATP-dependent rRNA helicase RRP3 of Phaeosphaeria nodorum (strain SN15 / ATCC MYA-4574 / FGSC 10173) (Glume blotch fungus).